We begin with the raw amino-acid sequence, 1067 residues long: Tricorn protease homolog 1 (1067 aa).

The segment at 518–551 is disordered; that stretch reads TTPSPFGPQRHGRPFETPDREETPDSEGTPTTRI. Residues 530-540 are compositionally biased toward basic and acidic residues; the sequence is RPFETPDREET. The active-site Charge relay system is the His740. Positions 754 to 851 are PDZ-like; sequence RQGLLGADLS…HAVVVPLADE (98 aa). Substrate is bound at residue Gly914. Catalysis depends on Ser961, which acts as the Nucleophile. Glu1019 functions as the Charge relay system in the catalytic mechanism.

Belongs to the peptidase S41B family. Forms a homohexameric complex; it is not known if it assembles into higher-order structures.

The protein localises to the cytoplasm. Its activity is regulated as follows. Stimulated by MgCl2. Degrades oligopeptides in a sequential manner. The polypeptide is Tricorn protease homolog 1 (tri1) (Streptomyces coelicolor (strain ATCC BAA-471 / A3(2) / M145)).